The following is a 477-amino-acid chain: MTDRYDAVLVGAGIMGATLAALLHELDPAMRLLMLERLDGPALESSAAANNAGTGHAANCELNYTPQQADGSVATAKALAINAAFERSLEFWATLRERGELDTPAFLNSVPHISFVWGQGDVAFLRQRHQQLSALPAFAGMEWSSDPAELAEWMPLVMQGRGASEPVAATRISRGTDVDFGSLTRLYLQDLQRSGALELRTGCEVNDLTRKSNGDWSVELAGGERVQTPFVFLGAGGGALPLLQRSTIPEAKAFAGFPVSGQWLVCGDNQLASRHLAKVYGKAKVGAPPMSVPHLDTRFINGERSLLFGPFAGFSTKFLKQGSLLDLPRSVRIGNLLPMLQVGAGNFPLVQYLINQLRQSPEQRLEALQQFLPQAEASDWTLSVAGQRVQIIKNGPKGGQLQLGTEVVAAADGSLAALLGASPGASTAVTTMLEVLERCFASRLATPAWQERLKALFPSWGGDVLSSRSRNTAVLGL.

This sequence belongs to the MQO family. The cofactor is FAD.

The catalysed reaction is (S)-malate + a quinone = a quinol + oxaloacetate. It participates in carbohydrate metabolism; tricarboxylic acid cycle; oxaloacetate from (S)-malate (quinone route): step 1/1. The protein is Probable malate:quinone oxidoreductase of Synechococcus sp. (strain RCC307).